Reading from the N-terminus, the 224-residue chain is Biosynthetic peptidoglycan transglycosylase (224 aa).

The chain crosses the membrane as a helical span at residues 12-32; the sequence is ILVVLAILPVFLLLVYSLPFV.

This sequence belongs to the glycosyltransferase 51 family.

The protein resides in the cell inner membrane. It carries out the reaction [GlcNAc-(1-&gt;4)-Mur2Ac(oyl-L-Ala-gamma-D-Glu-L-Lys-D-Ala-D-Ala)](n)-di-trans,octa-cis-undecaprenyl diphosphate + beta-D-GlcNAc-(1-&gt;4)-Mur2Ac(oyl-L-Ala-gamma-D-Glu-L-Lys-D-Ala-D-Ala)-di-trans,octa-cis-undecaprenyl diphosphate = [GlcNAc-(1-&gt;4)-Mur2Ac(oyl-L-Ala-gamma-D-Glu-L-Lys-D-Ala-D-Ala)](n+1)-di-trans,octa-cis-undecaprenyl diphosphate + di-trans,octa-cis-undecaprenyl diphosphate + H(+). Its pathway is cell wall biogenesis; peptidoglycan biosynthesis. Its function is as follows. Peptidoglycan polymerase that catalyzes glycan chain elongation from lipid-linked precursors. This is Biosynthetic peptidoglycan transglycosylase from Brucella suis biovar 1 (strain 1330).